We begin with the raw amino-acid sequence, 428 residues long: Serine--tRNA ligase (428 aa).

L-serine is bound at residue 231 to 233 (TAE). ATP is bound by residues 262 to 264 (RRE) and valine 278. L-serine is bound at residue glutamate 285. 349-352 (EVSS) lines the ATP pocket. An L-serine-binding site is contributed by serine 384.

The protein belongs to the class-II aminoacyl-tRNA synthetase family. Type-1 seryl-tRNA synthetase subfamily. In terms of assembly, homodimer. The tRNA molecule binds across the dimer.

The protein localises to the cytoplasm. The catalysed reaction is tRNA(Ser) + L-serine + ATP = L-seryl-tRNA(Ser) + AMP + diphosphate + H(+). It carries out the reaction tRNA(Sec) + L-serine + ATP = L-seryl-tRNA(Sec) + AMP + diphosphate + H(+). It functions in the pathway aminoacyl-tRNA biosynthesis; selenocysteinyl-tRNA(Sec) biosynthesis; L-seryl-tRNA(Sec) from L-serine and tRNA(Sec): step 1/1. In terms of biological role, catalyzes the attachment of serine to tRNA(Ser). Is also able to aminoacylate tRNA(Sec) with serine, to form the misacylated tRNA L-seryl-tRNA(Sec), which will be further converted into selenocysteinyl-tRNA(Sec). The protein is Serine--tRNA ligase of Chlamydia trachomatis serovar L2 (strain ATCC VR-902B / DSM 19102 / 434/Bu).